The sequence spans 149 residues: Urease accessory protein UreE (149 aa).

It belongs to the UreE family.

Its subcellular location is the cytoplasm. Its function is as follows. Involved in urease metallocenter assembly. Binds nickel. Probably functions as a nickel donor during metallocenter assembly. In Corynebacterium efficiens (strain DSM 44549 / YS-314 / AJ 12310 / JCM 11189 / NBRC 100395), this protein is Urease accessory protein UreE.